A 78-amino-acid polypeptide reads, in one-letter code: UPF0335 protein A1E_00570 (78 aa).

Belongs to the UPF0335 family.

The chain is UPF0335 protein A1E_00570 from Rickettsia canadensis (strain McKiel).